Here is a 309-residue protein sequence, read N- to C-terminus: Ribose-phosphate pyrophosphokinase (309 aa).

Residues 37-39 (DGE) and 96-97 (RQ) each bind ATP. The Mg(2+) site is built by histidine 130 and aspartate 169. Residue lysine 192 is part of the active site. D-ribose 5-phosphate-binding positions include arginine 194, aspartate 218, and 222–226 (DTAGT).

Belongs to the ribose-phosphate pyrophosphokinase family. Class I subfamily. Homohexamer. Mg(2+) is required as a cofactor.

The protein resides in the cytoplasm. It carries out the reaction D-ribose 5-phosphate + ATP = 5-phospho-alpha-D-ribose 1-diphosphate + AMP + H(+). It participates in metabolic intermediate biosynthesis; 5-phospho-alpha-D-ribose 1-diphosphate biosynthesis; 5-phospho-alpha-D-ribose 1-diphosphate from D-ribose 5-phosphate (route I): step 1/1. Involved in the biosynthesis of the central metabolite phospho-alpha-D-ribosyl-1-pyrophosphate (PRPP) via the transfer of pyrophosphoryl group from ATP to 1-hydroxyl of ribose-5-phosphate (Rib-5-P). The polypeptide is Ribose-phosphate pyrophosphokinase (Helicobacter hepaticus (strain ATCC 51449 / 3B1)).